A 620-amino-acid polypeptide reads, in one-letter code: Glutathione-regulated potassium-efflux system protein KefC (620 aa).

12 consecutive transmembrane segments (helical) span residues 4 to 24 (HTLIQALIYLGSAALIVPIAV), 26 to 46 (LGLGSVLGYLIAGCIIGPWGL), 54 to 74 (SILHFAEIGVVLMLFIIGLEL), 90 to 110 (GALQMVICGGLLGLFCMLLGL), 114 to 134 (VAELIGMTLALSSTAIAMQAM), 149 to 169 (FAVLLFQDIAAIPLVAMIPLL), 178 to 198 (MGAFVLSALKVAGALVLVVLL), 218 to 238 (VFSAVALFLVFGFGLLLEEVG), 270 to 290 (GLLLGLFFIGVGMSIDFGTLL), 294 to 314 (LRIVILLLGFLIIKIAMLWLI), 327 to 347 (WFAVLLGQGSEFAFVVFGAAQ), and 359 to 379 (SLTLAVALSMAATPILLVILN). The 120-residue stretch at 399–518 (QPRVIIAGFG…AGVEKPERET (120 aa)) folds into the RCK N-terminal domain. The tract at residues 597 to 620 (GWQGTEEGKHTGNMADEPETKPSS) is disordered.

It belongs to the monovalent cation:proton antiporter 2 (CPA2) transporter (TC 2.A.37) family. KefC subfamily. As to quaternary structure, homodimer. Interacts with the regulatory subunit KefF.

Its subcellular location is the cell inner membrane. Pore-forming subunit of a potassium efflux system that confers protection against electrophiles. Catalyzes K(+)/H(+) antiport. The chain is Glutathione-regulated potassium-efflux system protein KefC from Escherichia coli O127:H6 (strain E2348/69 / EPEC).